The chain runs to 113 residues: Large ribosomal subunit protein bL20c (113 aa).

This sequence belongs to the bacterial ribosomal protein bL20 family.

It localises to the plastid. Its subcellular location is the chloroplast. In terms of biological role, binds directly to 23S ribosomal RNA and is necessary for the in vitro assembly process of the 50S ribosomal subunit. It is not involved in the protein synthesizing functions of that subunit. This chain is Large ribosomal subunit protein bL20c, found in Staurastrum punctulatum (Green alga).